We begin with the raw amino-acid sequence, 218 residues long: 2-C-methyl-D-erythritol 4-phosphate cytidylyltransferase (218 aa).

Belongs to the IspD/TarI cytidylyltransferase family. IspD subfamily.

It catalyses the reaction 2-C-methyl-D-erythritol 4-phosphate + CTP + H(+) = 4-CDP-2-C-methyl-D-erythritol + diphosphate. The protein operates within isoprenoid biosynthesis; isopentenyl diphosphate biosynthesis via DXP pathway; isopentenyl diphosphate from 1-deoxy-D-xylulose 5-phosphate: step 2/6. In terms of biological role, catalyzes the formation of 4-diphosphocytidyl-2-C-methyl-D-erythritol from CTP and 2-C-methyl-D-erythritol 4-phosphate (MEP). This Chlamydia muridarum (strain MoPn / Nigg) protein is 2-C-methyl-D-erythritol 4-phosphate cytidylyltransferase.